The chain runs to 211 residues: Ras-related protein Rab-38 (211 aa).

10 residues coordinate GTP: G19, V20, G21, K22, T23, S24, S35, S36, Y38, and T41. A Mg(2+)-binding site is contributed by T23. Residues 32 to 46 (QNFSSHYRATIGVDF) carry the Switch 1 motif. The Mg(2+) site is built by T41 and D65. The GTP site is built by G68, K128, D130, A160, and K161. The short motif at 68–81 (GQERFGNMTRVYYR) is the Switch 2 element. C205 carries S-palmitoyl cysteine lipidation. Residue C208 is the site of S-geranylgeranyl cysteine attachment.

The protein belongs to the small GTPase superfamily. Rab family. In terms of assembly, interacts with ANKRD27. The cofactor is Mg(2+). Although at least one in vitro system can process and methylate the prenylated C-terminal, in an in vitro system that normally express Rab-38 and in vivo the prenylated C-terminal is not proteolytically processed and not methylated. Expressed in melanocytes.

The protein localises to the cell membrane. Its subcellular location is the melanosome. The protein resides in the cytoplasmic vesicle. It is found in the phagosome. It localises to the phagosome membrane. The protein localises to the melanosome membrane. The catalysed reaction is GTP + H2O = GDP + phosphate + H(+). Regulated by guanine nucleotide exchange factors (GEFs) including the BLOC-3 complex composed of HPS1 and HPS4 which promote the exchange of bound GDP for free GTP. Regulated by GTPase activating proteins (GAPs) including SGSM2 which increase the GTP hydrolysis activity. Inhibited by GDP dissociation inhibitors (GDIs). In terms of biological role, the small GTPases Rab are key regulators of intracellular membrane trafficking, from the formation of transport vesicles to their fusion with membranes. Rabs cycle between an inactive GDP-bound form and an active GTP-bound form that is able to recruit to membranes different sets of downstream effectors directly responsible for vesicle formation, movement, tethering and fusion. RAB38 may be involved in melanosomal transport and docking. Involved in the proper sorting of TYRP1. Involved in peripheral melanosomal distribution of TYRP1 in melanocytes; the function, which probably is implicating vesicle-trafficking, includes cooperation with ANKRD27 and VAMP7. Plays a role in the maturation of phagosomes that engulf pathogens, such as S.aureus and M.tuberculosis. Plays an important role in the control of melanin production and melanosome biogenesis. In concert with RAB32, regulates the proper trafficking of melanogenic enzymes TYR, TYRP1 and DCT/TYRP2 to melanosomes in melanocytes. This chain is Ras-related protein Rab-38, found in Homo sapiens (Human).